A 261-amino-acid chain; its full sequence is Transcription antitermination protein NusB (261 aa).

Residues 168-261 (ARVEDQPSDD…DLHKKDTTDD (94 aa)) are disordered. Polar residues predominate over residues 217 to 228 (VDTTSGNASDPE). The span at 242 to 261 (PTSKDHELATDLHKKDTTDD) shows a compositional bias: basic and acidic residues.

It belongs to the NusB family.

Involved in transcription antitermination. Required for transcription of ribosomal RNA (rRNA) genes. Binds specifically to the boxA antiterminator sequence of the ribosomal RNA (rrn) operons. This chain is Transcription antitermination protein NusB, found in Cutibacterium acnes (strain DSM 16379 / KPA171202) (Propionibacterium acnes).